A 1097-amino-acid polypeptide reads, in one-letter code: Kinesin-like protein KIF1C (1097 aa).

In terms of domain architecture, Kinesin motor spans 5–347 (SVKVAVRVRP…LRYADRTKQI (343 aa)). Residue 96–103 (GQTGAGKS) coordinates ATP. The residue at position 294 (serine 294) is a Phosphoserine. A coiled-coil region spans residues 358–380 (NARLIRELQEEVARLRELLMAQG). The tract at residues 397-434 (GGVLPAASSPPAPASPSSPPPHNGELEPSFSPSAEPQI) is disordered. Residues 404–418 (SSPPAPASPSSPPPH) show a composition bias toward pro residues. Residues 437 to 478 (EEAMERLQETEKIIAELNETWEEKLRKTEALRMEREALLAEM) adopt a coiled-coil conformation. The residue at position 491 (serine 491) is a Phosphoserine. In terms of domain architecture, FHA spans 520-587 (TRVGQVDVDI…LKSGNRIVMG (68 aa)). Residues 630–671 (EQQGIDIKLEMEKRLQDLENQYRKEKEEADLLLEQQRLYADS) are a coiled coil. 2 positions are modified to phosphoserine: serine 671 and serine 673. Residues 824 to 868 (AEVEDLRAHIDKLTGILQEVKLQNSSKDRELQALRDRMLRMERVI) adopt a coiled-coil conformation. 2 disordered regions span residues 897-921 (EAVSNDHSPAVRPSSPPQSSWERVS) and 946-1097 (QGLQ…GAAV). Serine 911 carries the phosphoserine modification. The segment covering 949-958 (QGSGGRGGGL) has biased composition (gly residues). The span at 997 to 1015 (GPQPPEEVTAPPPPPNRRP) shows a compositional bias: pro residues. A compositionally biased stretch (basic residues) spans 1016–1026 (PSPRRPHRPRR). A Phosphoserine modification is found at serine 1028. Position 1036 is an omega-N-methylarginine (arginine 1036). A compositionally biased stretch (pro residues) spans 1059 to 1077 (QPQPYPAQRPGPRYPPYTT). Position 1077 is a phosphothreonine (threonine 1077). At serine 1086 the chain carries Phosphoserine. A compositionally biased stretch (basic and acidic residues) spans 1086-1097 (SAPDLKESGAAV).

It belongs to the TRAFAC class myosin-kinesin ATPase superfamily. Kinesin family. Unc-104 subfamily.

The protein localises to the cytoplasm. It is found in the cytoskeleton. Its function is as follows. Probable motor protein. The polypeptide is Kinesin-like protein KIF1C (Kif1c) (Rattus norvegicus (Rat)).